Here is a 307-residue protein sequence, read N- to C-terminus: Putative S-adenosyl-L-methionine-dependent methyltransferase MUL_4430 (307 aa).

Residues D128 and 157–158 (DL) contribute to the S-adenosyl-L-methionine site.

Belongs to the UPF0677 family.

Exhibits S-adenosyl-L-methionine-dependent methyltransferase activity. This Mycobacterium ulcerans (strain Agy99) protein is Putative S-adenosyl-L-methionine-dependent methyltransferase MUL_4430.